A 214-amino-acid chain; its full sequence is Large ribosomal subunit protein uL16-like (214 aa).

This sequence belongs to the universal ribosomal protein uL16 family. In terms of assembly, component of the 60S large ribosomal subunit (LSU).

It is found in the cytoplasm. Its function is as follows. Testis-specific component of the ribosome, which is required for the transition from prophase to metaphase in male meiosis I. Compensates for the inactivated X-linked RPL10 paralog during spermatogenesis. The ribosome is a large ribonucleoprotein complex responsible for the synthesis of proteins in the cell. The small ribosomal subunit (SSU) binds messenger RNAs (mRNAs) and translates the encoded message by selecting cognate aminoacyl-transfer RNA (tRNA) molecules. The large subunit (LSU) contains the ribosomal catalytic site termed the peptidyl transferase center (PTC), which catalyzes the formation of peptide bonds, thereby polymerizing the amino acids delivered by tRNAs into a polypeptide chain. The nascent polypeptides leave the ribosome through a tunnel in the LSU and interact with protein factors that function in enzymatic processing, targeting, and the membrane insertion of nascent chains at the exit of the ribosomal tunnel. In Macaca fascicularis (Crab-eating macaque), this protein is Large ribosomal subunit protein uL16-like (RPL10L).